The following is a 291-amino-acid chain: Tyramine--L-glutamate ligase (291 aa).

An ATP-grasp domain is found at 104-274; the sequence is KYPVKNLGCS…LAELLIKNAN (171 aa). 131-176 serves as a coordination point for ATP; that stretch reads KDYVKTPKTFKPKKYVIKKIDGCGGKFNLFDENFLIQEFVEGESLS. Residues Asp-236, Glu-247, and Asn-249 each contribute to the Mg(2+) site. Mn(2+)-binding residues include Asp-236, Glu-247, and Asn-249.

Requires Mg(2+) as cofactor. Mn(2+) is required as a cofactor.

It carries out the reaction tyramine + L-glutamate + ATP = gamma-L-glutamyltyramine + ADP + phosphate + H(+). The protein operates within cofactor biosynthesis; methanofuran biosynthesis. Catalyzes the formation of an amide bond between tyramine and the gamma carboxy group of L-glutamate. The enzyme also accepts phenylethylamine in vitro. In Methanocaldococcus fervens (strain DSM 4213 / JCM 15782 / AG86) (Methanococcus fervens), this protein is Tyramine--L-glutamate ligase.